The chain runs to 290 residues: RIO-type serine/threonine-protein kinase Rio1 (290 aa).

Positions 1-22 are disordered; the sequence is MTDEFGMVEPQEGEAFGDEWEE. Residues 11 to 22 show a composition bias toward acidic residues; sequence QEGEAFGDEWEE. The Protein kinase domain occupies 79–290; sequence DAFGGPISTG…DEGEDGDGDE (212 aa). Residues 85–93, Lys-107, Glu-175, and Val-177 contribute to the ATP site; that span reads ISTGKEANV. Catalysis depends on Asp-218, which acts as the Proton acceptor. Mg(2+)-binding residues include Asn-223 and Asp-235. The 4-aspartylphosphate intermediate role is filled by Asp-235.

It belongs to the protein kinase superfamily. RIO-type Ser/Thr kinase family. The cofactor is Mg(2+). Mn(2+) serves as cofactor. Autophosphorylated.

It carries out the reaction L-seryl-[protein] + ATP = O-phospho-L-seryl-[protein] + ADP + H(+). The enzyme catalyses L-threonyl-[protein] + ATP = O-phospho-L-threonyl-[protein] + ADP + H(+). The catalysed reaction is ATP + H2O = ADP + phosphate + H(+). Serine/threonine-protein kinase that is able to autophosphorylate as well as to phosphorylate proteasome subunit alpha 1 (PsmA1) in vitro. Despite the protein kinase domain is proposed to act predominantly as an ATPase. This chain is RIO-type serine/threonine-protein kinase Rio1 (rio1), found in Haloferax volcanii (strain ATCC 29605 / DSM 3757 / JCM 8879 / NBRC 14742 / NCIMB 2012 / VKM B-1768 / DS2) (Halobacterium volcanii).